Here is a 461-residue protein sequence, read N- to C-terminus: Argininosuccinate lyase (461 aa).

The protein belongs to the lyase 1 family. Argininosuccinate lyase subfamily.

It localises to the cytoplasm. It catalyses the reaction 2-(N(omega)-L-arginino)succinate = fumarate + L-arginine. It functions in the pathway amino-acid biosynthesis; L-arginine biosynthesis; L-arginine from L-ornithine and carbamoyl phosphate: step 3/3. The polypeptide is Argininosuccinate lyase (Clostridium beijerinckii (strain ATCC 51743 / NCIMB 8052) (Clostridium acetobutylicum)).